The following is a 310-amino-acid chain: Aspartate carbamoyltransferase catalytic subunit (310 aa).

The carbamoyl phosphate site is built by R55 and T56. K85 serves as a coordination point for L-aspartate. Carbamoyl phosphate contacts are provided by R106, H135, and Q138. Positions 168 and 230 each coordinate L-aspartate. Carbamoyl phosphate is bound by residues L268 and P269.

Belongs to the aspartate/ornithine carbamoyltransferase superfamily. ATCase family. As to quaternary structure, heterododecamer (2C3:3R2) of six catalytic PyrB chains organized as two trimers (C3), and six regulatory PyrI chains organized as three dimers (R2).

It catalyses the reaction carbamoyl phosphate + L-aspartate = N-carbamoyl-L-aspartate + phosphate + H(+). Its pathway is pyrimidine metabolism; UMP biosynthesis via de novo pathway; (S)-dihydroorotate from bicarbonate: step 2/3. Its function is as follows. Catalyzes the condensation of carbamoyl phosphate and aspartate to form carbamoyl aspartate and inorganic phosphate, the committed step in the de novo pyrimidine nucleotide biosynthesis pathway. This chain is Aspartate carbamoyltransferase catalytic subunit, found in Buchnera aphidicola subsp. Acyrthosiphon pisum (strain 5A).